A 301-amino-acid polypeptide reads, in one-letter code: Nitric oxide synthase-interacting protein (301 aa).

Ser-36 carries the post-translational modification Phosphoserine. Residues 55–75 (DPVVTPDGYLYEREAILEYIL) are U-box-like. A Nuclear localization signal motif is present at residues 78 to 101 (KKEIARQMKAYEKQRGTRREEQKE). Ser-107 is subject to Phosphoserine. The interval 131–155 (AKALSGTSPDNAQPGPSVGPPSKDK) is disordered.

The protein belongs to the NOSIP family. Interacts with NOS1 and NOS3. Interacts with PP2A holoenzyme, containing PPP2CA, PPP2CB, PPP2R1A and PPP2R2A subunits.

The protein resides in the cytoplasm. It localises to the nucleus. It catalyses the reaction S-ubiquitinyl-[E2 ubiquitin-conjugating enzyme]-L-cysteine + [acceptor protein]-L-lysine = [E2 ubiquitin-conjugating enzyme]-L-cysteine + N(6)-ubiquitinyl-[acceptor protein]-L-lysine.. In terms of biological role, E3 ubiquitin-protein ligase that is essential for proper development of the forebrain, the eye, and the face. Catalyzes monoubiquitination of serine/threonine-protein phosphatase 2A (PP2A) catalytic subunit PPP2CA/PPP2CB. Negatively regulates nitric oxide production by inducing NOS1 and NOS3 translocation to actin cytoskeleton and inhibiting their enzymatic activity. This is Nitric oxide synthase-interacting protein (NOSIP) from Macaca fascicularis (Crab-eating macaque).